We begin with the raw amino-acid sequence, 2620 residues long: Ankyrin repeat and KH domain-containing protein mask-1 (2620 aa).

ANK repeat units lie at residues 254–283 (SKIT…DPNV), 288–318 (NCNT…KKPD), 361–390 (ERDS…KNPP), 402–431 (ERYS…PADL), 437–466 (IEPS…KIEE), 470–502 (KKNT…EVDV), 507–536 (TGDT…DLTA), 538–566 (KTSP…TIPQ), 568–597 (QLSR…DLNF), 600–629 (DERT…SVNF), 634–663 (NDAT…DPML), and 667–697 (DGVN…NMPM). 3 disordered regions span residues 699-726 (KDPP…SGQD), 994-1032 (HQEE…QPGA), and 1192-1229 (SLMA…AIDK). The segment covering 1012–1029 (TSLTAPNPADTSDVTTKQ) has biased composition (polar residues). Low complexity predominate over residues 1192–1206 (SLMAKSVQSQQQQGQ). Positions 1210-1221 (THSEGDGAERAK) are enriched in basic and acidic residues. ANK repeat units lie at residues 1234 to 1263 (TLET…NIEH), 1267 to 1296 (KGFS…AIEA), 1301 to 1330 (TKDT…NKEH), 1334 to 1363 (SDYT…EINS), 1369 to 1398 (LGIS…DINA), 1403 to 1432 (NRNT…NVEH), 1436 to 1465 (TGLT…DTNA), 1471 to 1500 (TKDT…AVDV), 1504 to 1533 (KGCT…DPDM), and 1537 to 1566 (RKIS…QFPN). A coiled-coil region spans residues 1596–1648 (AKKAQAESAELAAQKLLELIDEEKVQKEVKKQKQKDKKIKKKEEKKIKKQEAE). Disordered stretches follow at residues 1621–1720 (QKEV…AEEP) and 1759–1804 (KEGK…EIDT). Basic and acidic residues predominate over residues 1636-1647 (KKEEKKIKKQEA). Positions 1648 to 1661 (EPEPEPEPEPEPVP) are enriched in acidic residues. Composition is skewed to low complexity over residues 1665–1681 (PVVI…IVVE) and 1769–1791 (KSGY…TTSS). The KH domain maps to 1807–1873 (ESSWKLTIPA…EMVRYAMNII (67 aa)). Polar residues predominate over residues 1899-1913 (ASSFSSEGTSKSAVD). Disordered regions lie at residues 1899-1962 (ASSF…GNVW), 1976-2010 (LMET…QASE), 2067-2143 (SVQS…QTQN), 2267-2294 (NATS…VTTG), 2307-2343 (SFAP…QQQQ), 2372-2391 (QHQS…KFSM), 2429-2448 (QESS…NSYY), and 2496-2620 (QKKQ…SSNW). Low complexity predominate over residues 1917–1946 (APSSIPKSLSSASIARQSASPIPQQSSQRS). Residues 1982–1993 (ISQSPKQAPQIP) show a composition bias toward polar residues. 3 stretches are compositionally biased toward low complexity: residues 1994–2006 (STQQ…SRQD), 2067–2078 (SVQSVQHMQQQQ), and 2100–2118 (SQPI…SSFS). Polar residues-rich tracts occupy residues 2267-2286 (NATS…VQQP) and 2325-2339 (RSQS…STNI). Polar residues predominate over residues 2505–2528 (SFMHNSQQPQPFGAPSNASANQSR). Over residues 2535–2547 (RPQPPPFVAPQAP) the composition is skewed to pro residues. The segment covering 2552–2565 (SLGNASSTTNPSRT) has biased composition (polar residues). Low complexity-rich tracts occupy residues 2566-2588 (SMQQ…QMPQ) and 2597-2620 (QQQQ…SSNW).

Belongs to the mask family.

Its subcellular location is the cytoplasm. The chain is Ankyrin repeat and KH domain-containing protein mask-1 from Caenorhabditis elegans.